We begin with the raw amino-acid sequence, 94 residues long: Large ribosomal subunit protein bL27 (94 aa).

Residues 1–9 constitute a propeptide that is removed on maturation; sequence MNLANLQLF. Positions 11-34 are disordered; that stretch reads HKKGGGSTSNGRDSQAKRLGAKAA.

This sequence belongs to the bacterial ribosomal protein bL27 family. In terms of processing, the N-terminus is cleaved by ribosomal processing cysteine protease Prp.

This Streptococcus pyogenes serotype M3 (strain ATCC BAA-595 / MGAS315) protein is Large ribosomal subunit protein bL27.